The sequence spans 381 residues: Dihydroorotate dehydrogenase (quinone) (381 aa).

Residues 77–81 (AGCDK) and A101 each bind FMN. K81 serves as a coordination point for substrate. Residue 126–129 (NRLG) coordinates substrate. N158 and N191 together coordinate FMN. N191 is a binding site for substrate. The Nucleophile role is filled by S194. Position 196 (N196) interacts with substrate. FMN is bound by residues K229 and T257. 258 to 259 (NT) is a substrate binding site. FMN contacts are provided by residues G287, G316, and 337–338 (YT).

It belongs to the dihydroorotate dehydrogenase family. Type 2 subfamily. As to quaternary structure, monomer. It depends on FMN as a cofactor.

Its subcellular location is the cell membrane. It carries out the reaction (S)-dihydroorotate + a quinone = orotate + a quinol. It functions in the pathway pyrimidine metabolism; UMP biosynthesis via de novo pathway; orotate from (S)-dihydroorotate (quinone route): step 1/1. Its function is as follows. Catalyzes the conversion of dihydroorotate to orotate with quinone as electron acceptor. The chain is Dihydroorotate dehydrogenase (quinone) (pyrD) from Synechocystis sp. (strain ATCC 27184 / PCC 6803 / Kazusa).